A 505-amino-acid chain; its full sequence is Pleckstrin homology domain-containing family D member 1 (505 aa).

One can recognise a PH domain in the interval 28 to 136 (KVQLYGVLWK…WLEMLQESGK (109 aa)). A coiled-coil region spans residues 146 to 391 (EAMIKSLEAQ…KVRNKEKEER (246 aa)). The interval 264–284 (DKNQPQPLTNQSEQPPATDGL) is disordered. Residues 267–278 (QPQPLTNQSEQP) show a composition bias toward polar residues. R502 is modified (omega-N-methylarginine).

Belongs to the PLEKHD1 family.

The polypeptide is Pleckstrin homology domain-containing family D member 1 (Plekhd1) (Rattus norvegicus (Rat)).